The primary structure comprises 70 residues: Large ribosomal subunit protein eL38 (70 aa).

This sequence belongs to the eukaryotic ribosomal protein eL38 family.

The sequence is that of Large ribosomal subunit protein eL38 (rpl-38) from Ostertagia ostertagi (Brown stomach worm).